The chain runs to 90 residues: UPF0213 protein Reut_B5558 (90 aa).

Residues 5–80 (RQWYLYLLEC…KRMSSAQKIA (76 aa)) enclose the GIY-YIG domain.

It belongs to the UPF0213 family.

This Cupriavidus pinatubonensis (strain JMP 134 / LMG 1197) (Cupriavidus necator (strain JMP 134)) protein is UPF0213 protein Reut_B5558.